A 331-amino-acid polypeptide reads, in one-letter code: DNA-directed RNA polymerase subunit alpha (331 aa).

Residues 1–237 (MQSFEKEFLK…DQLSSFIDLK (237 aa)) are alpha N-terminal domain (alpha-NTD). Residues 251 to 331 (FDPSLLNLVD…NWPPKHLSEQ (81 aa)) are alpha C-terminal domain (alpha-CTD).

The protein belongs to the RNA polymerase alpha chain family. In terms of assembly, homodimer. The RNAP catalytic core consists of 2 alpha, 1 beta, 1 beta' and 1 omega subunit. When a sigma factor is associated with the core the holoenzyme is formed, which can initiate transcription.

It catalyses the reaction RNA(n) + a ribonucleoside 5'-triphosphate = RNA(n+1) + diphosphate. DNA-dependent RNA polymerase catalyzes the transcription of DNA into RNA using the four ribonucleoside triphosphates as substrates. In Blochmanniella floridana, this protein is DNA-directed RNA polymerase subunit alpha.